Consider the following 409-residue polypeptide: DNA replication and repair protein RecF (409 aa).

Gly-30–Thr-37 is a binding site for ATP.

This sequence belongs to the RecF family.

The protein resides in the cytoplasm. Functionally, the RecF protein is involved in DNA metabolism; it is required for DNA replication and normal SOS inducibility. RecF binds preferentially to single-stranded, linear DNA. It also seems to bind ATP. This chain is DNA replication and repair protein RecF, found in Rhodococcus erythropolis (strain PR4 / NBRC 100887).